Here is a 277-residue protein sequence, read N- to C-terminus: Putative thiosulfate sulfurtransferase (277 aa).

Rhodanese domains are found at residues 18–125 (KAPK…PLSA) and 154–274 (AIGT…APIE). Residue Lys67 forms an Isoglutamyl lysine isopeptide (Lys-Gln) (interchain with Q-Cter in protein Pup) linkage. Cys233 (cysteine persulfide intermediate) is an active-site residue. Substrate is bound at residue Arg238.

The enzyme catalyses thiosulfate + hydrogen cyanide = thiocyanate + sulfite + 2 H(+). Functionally, may be a sulfotransferase involved in the formation of thiosulfate. The sequence is that of Putative thiosulfate sulfurtransferase from Mycolicibacterium smegmatis (strain ATCC 700084 / mc(2)155) (Mycobacterium smegmatis).